A 267-amino-acid polypeptide reads, in one-letter code: tRNA pseudouridine synthase A (267 aa).

Aspartate 51 acts as the Nucleophile in catalysis. Tyrosine 109 contributes to the substrate binding site.

Belongs to the tRNA pseudouridine synthase TruA family. Homodimer.

The catalysed reaction is uridine(38/39/40) in tRNA = pseudouridine(38/39/40) in tRNA. Formation of pseudouridine at positions 38, 39 and 40 in the anticodon stem and loop of transfer RNAs. The chain is tRNA pseudouridine synthase A from Staphylococcus aureus (strain USA300).